The chain runs to 957 residues: Bifunctional glutamine synthetase adenylyltransferase/adenylyl-removing enzyme (957 aa).

An adenylyl removase region spans residues 1–447; it reads MFSQLDFTGL…IFNQLIGEEE (447 aa). Residues 454-957 are adenylyl transferase; sequence VNEQLAIWQD…IWQQIFTDNE (504 aa).

It belongs to the GlnE family. The cofactor is Mg(2+).

It carries out the reaction [glutamine synthetase]-O(4)-(5'-adenylyl)-L-tyrosine + phosphate = [glutamine synthetase]-L-tyrosine + ADP. It catalyses the reaction [glutamine synthetase]-L-tyrosine + ATP = [glutamine synthetase]-O(4)-(5'-adenylyl)-L-tyrosine + diphosphate. Its function is as follows. Involved in the regulation of glutamine synthetase GlnA, a key enzyme in the process to assimilate ammonia. When cellular nitrogen levels are high, the C-terminal adenylyl transferase (AT) inactivates GlnA by covalent transfer of an adenylyl group from ATP to specific tyrosine residue of GlnA, thus reducing its activity. Conversely, when nitrogen levels are low, the N-terminal adenylyl removase (AR) activates GlnA by removing the adenylyl group by phosphorolysis, increasing its activity. The regulatory region of GlnE binds the signal transduction protein PII (GlnB) which indicates the nitrogen status of the cell. The sequence is that of Bifunctional glutamine synthetase adenylyltransferase/adenylyl-removing enzyme from Haemophilus ducreyi (strain 35000HP / ATCC 700724).